We begin with the raw amino-acid sequence, 175 residues long: Ribosome maturation factor RimM (175 aa).

Positions 96-172 (PDTYYDHQLE…LIEIDPPDGL (77 aa)) constitute a PRC barrel domain.

The protein belongs to the RimM family. Binds ribosomal protein uS19.

The protein localises to the cytoplasm. In terms of biological role, an accessory protein needed during the final step in the assembly of 30S ribosomal subunit, possibly for assembly of the head region. Essential for efficient processing of 16S rRNA. May be needed both before and after RbfA during the maturation of 16S rRNA. It has affinity for free ribosomal 30S subunits but not for 70S ribosomes. This is Ribosome maturation factor RimM from Mycolicibacterium paratuberculosis (strain ATCC BAA-968 / K-10) (Mycobacterium paratuberculosis).